The chain runs to 418 residues: ATP-dependent Clp protease ATP-binding subunit ClpX (418 aa).

In terms of domain architecture, ClpX-type ZB spans 1–54 (MTRKDDESDQFFCSFCGKNQKEVKKLIAGPSVYICNECVSLCEEIIEDEDKESL). Residues cysteine 13, cysteine 16, cysteine 35, and cysteine 38 each contribute to the Zn(2+) site. Residue 120–127 (PTGCGKTL) coordinates ATP.

The protein belongs to the ClpX chaperone family. Component of the ClpX-ClpP complex. Forms a hexameric ring that, in the presence of ATP, binds to fourteen ClpP subunits assembled into a disk-like structure with a central cavity, resembling the structure of eukaryotic proteasomes.

Functionally, ATP-dependent specificity component of the Clp protease. It directs the protease to specific substrates. Can perform chaperone functions in the absence of ClpP. The protein is ATP-dependent Clp protease ATP-binding subunit ClpX of Desulforapulum autotrophicum (strain ATCC 43914 / DSM 3382 / VKM B-1955 / HRM2) (Desulfobacterium autotrophicum).